The chain runs to 235 residues: Large ribosomal subunit protein uL1 (235 aa).

It belongs to the universal ribosomal protein uL1 family. Part of the 50S ribosomal subunit.

Functionally, binds directly to 23S rRNA. The L1 stalk is quite mobile in the ribosome, and is involved in E site tRNA release. Protein L1 is also a translational repressor protein, it controls the translation of the L11 operon by binding to its mRNA. The sequence is that of Large ribosomal subunit protein uL1 from Prochlorococcus marinus (strain MIT 9215).